Reading from the N-terminus, the 386-residue chain is MSKRDYYEVLGVERGVDEKALKSAYRKLAMKYHPDQNAGDTAAEDKFKEVGEAYAILSDPQKRAAYDRYGHGAFENGGMGGGSPFGGQGGNPEDIFQDLFSQVFGAGGFAGGRRRSGPQRGADLRYDLEITLEEAFYGKDETIHVPQAVACRPCEGTGAAPGTKPETCETCGGHGRVRAQQGFFTMERTCHICQGRGQIIRKPCKTCGGHGQVKEERKLQVKIPAGVESGMRIRLSGEGEPGTSGGPKGDLYIFVEVVEHDIFERDGPNLYCRAPVPMTTAALGGEIDIPTIDGGRARVAIPEGAQTGRKLRLRSKGMPSVRANGQTGDLYVEMFVETPQNLTARQKDLLRQFCDCSGADCHPESEGFLGKIKRFWGGEGDEKRPV.

The 66-residue stretch at 5 to 70 (DYYEVLGVER…QKRAAYDRYG (66 aa)) folds into the J domain. The CR-type zinc finger occupies 138 to 216 (GKDETIHVPQ…CGGHGQVKEE (79 aa)). The Zn(2+) site is built by cysteine 151, cysteine 154, cysteine 168, cysteine 171, cysteine 190, cysteine 193, cysteine 204, and cysteine 207. 4 CXXCXGXG motif repeats span residues 151 to 158 (CRPCEGTG), 168 to 175 (CETCGGHG), 190 to 197 (CHICQGRG), and 204 to 211 (CKTCGGHG).

It belongs to the DnaJ family. As to quaternary structure, homodimer. Zn(2+) is required as a cofactor.

Its subcellular location is the cytoplasm. Its function is as follows. Participates actively in the response to hyperosmotic and heat shock by preventing the aggregation of stress-denatured proteins and by disaggregating proteins, also in an autonomous, DnaK-independent fashion. Unfolded proteins bind initially to DnaJ; upon interaction with the DnaJ-bound protein, DnaK hydrolyzes its bound ATP, resulting in the formation of a stable complex. GrpE releases ADP from DnaK; ATP binding to DnaK triggers the release of the substrate protein, thus completing the reaction cycle. Several rounds of ATP-dependent interactions between DnaJ, DnaK and GrpE are required for fully efficient folding. Also involved, together with DnaK and GrpE, in the DNA replication of plasmids through activation of initiation proteins. This chain is Chaperone protein DnaJ, found in Hyphomonas neptunium (strain ATCC 15444).